Reading from the N-terminus, the 311-residue chain is Pyrimidine-specific ribonucleoside hydrolase RihA (311 aa).

The active site involves H240.

This sequence belongs to the IUNH family. RihA subfamily.

In terms of biological role, hydrolyzes with equal efficiency cytidine or uridine to ribose and cytosine or uracil, respectively. The sequence is that of Pyrimidine-specific ribonucleoside hydrolase RihA from Escherichia coli O157:H7.